A 273-amino-acid chain; its full sequence is Putative phosphoenolpyruvate synthase regulatory protein (273 aa).

Residue 153-160 (AVSRAGKT) participates in ADP binding.

Belongs to the pyruvate, phosphate/water dikinase regulatory protein family. PSRP subfamily.

It carries out the reaction [pyruvate, water dikinase] + ADP = [pyruvate, water dikinase]-phosphate + AMP + H(+). It catalyses the reaction [pyruvate, water dikinase]-phosphate + phosphate + H(+) = [pyruvate, water dikinase] + diphosphate. Functionally, bifunctional serine/threonine kinase and phosphorylase involved in the regulation of the phosphoenolpyruvate synthase (PEPS) by catalyzing its phosphorylation/dephosphorylation. The sequence is that of Putative phosphoenolpyruvate synthase regulatory protein from Xanthomonas campestris pv. campestris (strain 8004).